Here is a 320-residue protein sequence, read N- to C-terminus: Protoheme IX farnesyltransferase (320 aa).

The next 9 helical transmembrane spans lie at 38 to 58 (VIEL…RGFP), 60 to 80 (IGLI…AGVF), 109 to 129 (EALV…WFGA), 132 to 152 (LSAW…TMIL), 159 to 179 (NIVW…AAVT), 184 to 204 (WPAI…YWPL), 222 to 242 (AIAG…AMVA), 254 to 276 (GWVY…HALY), and 299 to 319 (YLTL…AIVG).

Belongs to the UbiA prenyltransferase family. Protoheme IX farnesyltransferase subfamily.

It localises to the cell membrane. It carries out the reaction heme b + (2E,6E)-farnesyl diphosphate + H2O = Fe(II)-heme o + diphosphate. The protein operates within porphyrin-containing compound metabolism; heme O biosynthesis; heme O from protoheme: step 1/1. Converts heme B (protoheme IX) to heme O by substitution of the vinyl group on carbon 2 of heme B porphyrin ring with a hydroxyethyl farnesyl side group. In Paenarthrobacter aurescens (strain TC1), this protein is Protoheme IX farnesyltransferase.